The following is a 329-amino-acid chain: Haptoglobin (329 aa).

N-linked (GlcNAc...) asparagine glycosylation is present at Asn9. One can recognise a Sushi domain in the interval 13-70 (VSLPKPPVIENGYVEHMIRYQCKPFYKLHTEGDGVYTLNSEKHWTNKAVGEKLPECEA). 2 disulfides stabilise this stretch: Cys34–Cys68 and Cys72–Cys189. A propeptide is located at residue Arg84. The 243-residue stretch at 85–327 (IMGGSVDAKG…VLAWVQETIA (243 aa)) folds into the Peptidase S1 domain. 2 N-linked (GlcNAc...) asparagine glycosylation sites follow: Asn107 and Asn214. 2 cysteine pairs are disulfide-bonded: Cys232–Cys263 and Cys274–Cys304. The tract at residues 241–246 (VPEKKS) is interaction with CD163.

Belongs to the peptidase S1 family. Tetramer of two alpha and two beta chains; disulfide-linked. The hemoglobin/haptoglobin complex is composed of a haptoglobin dimer bound to two hemoglobin alpha-beta dimers. Interacts with CD163. Interacts with ERGIC3. In terms of tissue distribution, expressed by the liver and secreted in plasma.

The protein resides in the secreted. The protein localises to the extracellular space. Its function is as follows. As a result of hemolysis, hemoglobin is found to accumulate in the kidney and is secreted in the urine. Haptoglobin captures, and combines with free plasma hemoglobin to allow hepatic recycling of heme iron and to prevent kidney damage. Haptoglobin also acts as an antioxidant, has antibacterial activity and plays a role in modulating many aspects of the acute phase response. Hemoglobin/haptoglobin complexes are rapidly cleared by the macrophage CD163 scavenger receptor expressed on the surface of liver Kupfer cells through an endocytic lysosomal degradation pathway. The sequence is that of Haptoglobin (HP) from Canis lupus familiaris (Dog).